Here is a 145-residue protein sequence, read N- to C-terminus: Probable DNA-directed RNA polymerases I and III subunit RPAC2 (145 aa).

The interval 1 to 52 (MGKKSEKKVVEETMEVDEQPAVEPEAVPEEEPEVEDEDLNVPKKKKMEILDP) is disordered. Acidic residues predominate over residues 12–39 (ETMEVDEQPAVEPEAVPEEEPEVEDEDL).

It belongs to the archaeal Rpo11/eukaryotic RPB11/RPC19 RNA polymerase subunit family. As to quaternary structure, component of the RNA polymerase I (Pol I) and RNA polymerase III (Pol III) complexes consisting of at least 13 and 17 subunits, respectively.

The protein resides in the nucleus. Functionally, DNA-dependent RNA polymerase catalyzes the transcription of DNA into RNA using the four ribonucleoside triphosphates as substrates. Common core component of RNA polymerases I and III which synthesize ribosomal RNA precursors and small RNAs, such as 5S rRNA and tRNAs, respectively. This chain is Probable DNA-directed RNA polymerases I and III subunit RPAC2 (rpac-19), found in Caenorhabditis briggsae.